The sequence spans 240 residues: Octanoyltransferase (240 aa).

Residues 31–216 (GQVGDTLLLL…HLCAVFDLEP (186 aa)) form the BPL/LPL catalytic domain. Substrate is bound by residues 76–83 (RGGGATYH), 145–147 (AIG), and 159–161 (GLA). The active-site Acyl-thioester intermediate is cysteine 177.

Belongs to the LipB family.

Its subcellular location is the cytoplasm. The catalysed reaction is octanoyl-[ACP] + L-lysyl-[protein] = N(6)-octanoyl-L-lysyl-[protein] + holo-[ACP] + H(+). It functions in the pathway protein modification; protein lipoylation via endogenous pathway; protein N(6)-(lipoyl)lysine from octanoyl-[acyl-carrier-protein]: step 1/2. In terms of biological role, catalyzes the transfer of endogenously produced octanoic acid from octanoyl-acyl-carrier-protein onto the lipoyl domains of lipoate-dependent enzymes. Lipoyl-ACP can also act as a substrate although octanoyl-ACP is likely to be the physiological substrate. The chain is Octanoyltransferase from Roseiflexus sp. (strain RS-1).